A 381-amino-acid chain; its full sequence is Chaperone protein DnaJ (381 aa).

The region spanning 5–70 (DYYEVLGIER…EKRSAYDQFG (66 aa)) is the J domain. The CR-type zinc finger occupies 137 to 215 (GTTVDIRVPR…CHGEGRVRET (79 aa)). Residues C150, C153, C167, C170, C189, C192, C203, and C206 each contribute to the Zn(2+) site. CXXCXGXG motif repeat units lie at residues 150 to 157 (CEHCDGDG), 167 to 174 (CPTCHGQG), 189 to 196 (CPTCHGAG), and 203 to 210 (CRKCHGEG).

It belongs to the DnaJ family. As to quaternary structure, homodimer. The cofactor is Zn(2+).

It is found in the cytoplasm. Functionally, participates actively in the response to hyperosmotic and heat shock by preventing the aggregation of stress-denatured proteins and by disaggregating proteins, also in an autonomous, DnaK-independent fashion. Unfolded proteins bind initially to DnaJ; upon interaction with the DnaJ-bound protein, DnaK hydrolyzes its bound ATP, resulting in the formation of a stable complex. GrpE releases ADP from DnaK; ATP binding to DnaK triggers the release of the substrate protein, thus completing the reaction cycle. Several rounds of ATP-dependent interactions between DnaJ, DnaK and GrpE are required for fully efficient folding. Also involved, together with DnaK and GrpE, in the DNA replication of plasmids through activation of initiation proteins. The protein is Chaperone protein DnaJ of Chromohalobacter salexigens (strain ATCC BAA-138 / DSM 3043 / CIP 106854 / NCIMB 13768 / 1H11).